A 157-amino-acid polypeptide reads, in one-letter code: Immediate-early protein ICP-18 (157 aa).

The chain is Immediate-early protein ICP-18 from Frog virus 3 (isolate Goorha) (FV-3).